The sequence spans 343 residues: UDP-3-O-acylglucosamine N-acyltransferase (343 aa).

Histidine 248 functions as the Proton acceptor in the catalytic mechanism.

It belongs to the transferase hexapeptide repeat family. LpxD subfamily. Homotrimer.

It catalyses the reaction a UDP-3-O-[(3R)-3-hydroxyacyl]-alpha-D-glucosamine + a (3R)-hydroxyacyl-[ACP] = a UDP-2-N,3-O-bis[(3R)-3-hydroxyacyl]-alpha-D-glucosamine + holo-[ACP] + H(+). It functions in the pathway bacterial outer membrane biogenesis; LPS lipid A biosynthesis. Its function is as follows. Catalyzes the N-acylation of UDP-3-O-acylglucosamine using 3-hydroxyacyl-ACP as the acyl donor. Is involved in the biosynthesis of lipid A, a phosphorylated glycolipid that anchors the lipopolysaccharide to the outer membrane of the cell. This Microcystis aeruginosa (strain NIES-843 / IAM M-2473) protein is UDP-3-O-acylglucosamine N-acyltransferase.